The following is a 132-amino-acid chain: MGGVNIYAIIESGGKQYKVTPGQLVEVDLLDLAEGDSIELDKVLMLNDGETVTIGSPTISGAKVTATVAGHIKGDKVFAYRFKAKTRNHKKMGHRQLYTVLTIGEILTGGAAEKPARKPRAKKTNEVTTDGA.

The interval 111–132 (AAEKPARKPRAKKTNEVTTDGA) is disordered.

Belongs to the bacterial ribosomal protein bL21 family. As to quaternary structure, part of the 50S ribosomal subunit. Contacts protein L20.

Functionally, this protein binds to 23S rRNA in the presence of protein L20. This is Large ribosomal subunit protein bL21 from Dehalococcoides mccartyi (strain CBDB1).